The chain runs to 95 residues: UPF0358 protein BT9727_3692 (95 aa).

Belongs to the UPF0358 family.

The chain is UPF0358 protein BT9727_3692 from Bacillus thuringiensis subsp. konkukian (strain 97-27).